We begin with the raw amino-acid sequence, 940 residues long: Protein translocase subunit SecA (940 aa).

Residues glutamine 87, 105–109, and aspartate 494 each bind ATP; that span reads GEGKT. The tract at residues 879-940 is disordered; sequence AQQQKKAVEG…KCHGASEASV (62 aa). Over residues 884 to 898 the composition is skewed to basic and acidic residues; the sequence is KAVEGRATADGKLDE. Over residues 900–915 the composition is skewed to low complexity; that stretch reads SVAAAARPAAASRPAV. Residues cysteine 921, cysteine 923, cysteine 932, and histidine 933 each coordinate Zn(2+).

It belongs to the SecA family. In terms of assembly, monomer and homodimer. Part of the essential Sec protein translocation apparatus which comprises SecA, SecYEG and auxiliary proteins SecDF-YajC and YidC. Requires Zn(2+) as cofactor.

The protein resides in the cell inner membrane. It localises to the cytoplasm. The catalysed reaction is ATP + H2O + cellular proteinSide 1 = ADP + phosphate + cellular proteinSide 2.. Functionally, part of the Sec protein translocase complex. Interacts with the SecYEG preprotein conducting channel. Has a central role in coupling the hydrolysis of ATP to the transfer of proteins into and across the cell membrane, serving as an ATP-driven molecular motor driving the stepwise translocation of polypeptide chains across the membrane. The protein is Protein translocase subunit SecA of Myxococcus xanthus (strain DK1622).